Reading from the N-terminus, the 360-residue chain is MSGQQTTTHQPWPGVIAAYRDRLPVGDDWTPVTLLEGGTPLIAAPRLSEQTGCTIHLKVEGLNPTGSFKDRGMTMAVTDALARGQRAVLCASTGNTSASAAAYAARAGITCAVLIPQGKIAMGKLAQAVMHGAKIIQIDGNFDDCLELARKMAADFPMISLVNSVNPVRIEGQKTAVFEIVDALGTAPHVHALPVGNAGNITAYWKGYTEYHADGLIDRLPRMLGTQAAGAAPLVLGEPVSHPETIATAIRIGSPASWTSAVEAQQQSKGRFLAATDEEILAAYHLVARAEGVFVEPASAASIAGLLKAIDGGWVARGSTVVCTITGNGLKDPDTALKDMPSVSPVPVDAVAVVEQLGLV.

Position 69 is an N6-(pyridoxal phosphate)lysine (Lys-69). Pyridoxal 5'-phosphate-binding positions include Asn-95, 196–200 (GNAGN), and Thr-326.

The protein belongs to the threonine synthase family. In terms of assembly, homodimer. Requires pyridoxal 5'-phosphate as cofactor.

The catalysed reaction is O-phospho-L-homoserine + H2O = L-threonine + phosphate. It participates in amino-acid biosynthesis; L-threonine biosynthesis; L-threonine from L-aspartate: step 5/5. Functionally, catalyzes the gamma-elimination of phosphate from L-phosphohomoserine and the beta-addition of water to produce L-threonine. The polypeptide is Threonine synthase (thrC) (Mycobacterium leprae (strain TN)).